The sequence spans 179 residues: Large ribosomal subunit protein uL5 (179 aa).

This sequence belongs to the universal ribosomal protein uL5 family. Part of the 50S ribosomal subunit; part of the 5S rRNA/L5/L18/L25 subcomplex. Contacts the 5S rRNA and the P site tRNA. Forms a bridge to the 30S subunit in the 70S ribosome.

This is one of the proteins that bind and probably mediate the attachment of the 5S RNA into the large ribosomal subunit, where it forms part of the central protuberance. In the 70S ribosome it contacts protein S13 of the 30S subunit (bridge B1b), connecting the 2 subunits; this bridge is implicated in subunit movement. Contacts the P site tRNA; the 5S rRNA and some of its associated proteins might help stabilize positioning of ribosome-bound tRNAs. This chain is Large ribosomal subunit protein uL5, found in Azotobacter vinelandii (strain DJ / ATCC BAA-1303).